A 520-amino-acid polypeptide reads, in one-letter code: 2-isopropylmalate synthase (520 aa).

The Pyruvate carboxyltransferase domain occupies 12-274 (IRIFDTTLRD…DSAINTPRIV (263 aa)). Aspartate 21, histidine 209, histidine 211, and asparagine 245 together coordinate Mn(2+). Positions 396-520 (RLASMTISDV…VVAGKTAAVA (125 aa)) are regulatory domain.

The protein belongs to the alpha-IPM synthase/homocitrate synthase family. LeuA type 1 subfamily. As to quaternary structure, homodimer. The cofactor is Mn(2+).

It localises to the cytoplasm. It catalyses the reaction 3-methyl-2-oxobutanoate + acetyl-CoA + H2O = (2S)-2-isopropylmalate + CoA + H(+). It participates in amino-acid biosynthesis; L-leucine biosynthesis; L-leucine from 3-methyl-2-oxobutanoate: step 1/4. Catalyzes the condensation of the acetyl group of acetyl-CoA with 3-methyl-2-oxobutanoate (2-ketoisovalerate) to form 3-carboxy-3-hydroxy-4-methylpentanoate (2-isopropylmalate). This chain is 2-isopropylmalate synthase, found in Xanthomonas axonopodis pv. citri (strain 306).